The following is a 288-amino-acid chain: Syntaxin-1A (288 aa).

A compositionally biased stretch (basic and acidic residues) spans 1 to 13 (MKDRTQELRTAKD). A disordered region spans residues 1-20 (MKDRTQELRTAKDSDDDDDV). Residues 1–265 (MKDRTQELRT…KYQSKARRKK (265 aa)) are Cytoplasmic-facing. A phosphoserine mark is found at Ser-14, Ser-64, and Ser-95. Residues 68 to 109 (DEKTKEELEELMSDIKKTANKVRSKLKSIEQSIEQEEGLNRS) adopt a coiled-coil conformation. Ser-188 bears the Phosphoserine; by DAPK1 mark. One can recognise a t-SNARE coiled-coil homology domain in the interval 192 to 254 (LSEIETRHSE…ERAVSDTKKA (63 aa)). Glycyl lysine isopeptide (Lys-Gly) (interchain with G-Cter in SUMO) cross-links involve residues Lys-252, Lys-253, and Lys-256. A helical; Anchor for type IV membrane protein transmembrane segment spans residues 266–288 (IMIVICCVVLGIVIASTFGGIFG).

It belongs to the syntaxin family. Part of the SNARE core complex containing SNAP25, VAMP2 and STX1A; this complex constitutes the basic catalytic machinery of the complex neurotransmitter release apparatus. The SNARE complex interacts with CPLX1. Interacts with STXBP1. The interaction with STXBP1 promotes assembly of the SNARE complex. Interacts (via C-terminus) with KCNB1 (via C-terminus); the interaction increases in a calcium-dependent manner and induces a pore-independent enhancement of exocytosis in neuroendocrine cells, chromaffin cells, pancreatic beta cells and from the soma of dorsal root ganglia (DRG) neurons. Interacts with SYTL4. Interacts with STXBP6. Interacts with PLCL1 (via C2 domain). Interacts with OTOF. Interacts with LGI3. Interacts (via the H3 domain) with SLC6A4 (via the N-terminus); this interaction regulates SLC4A6 channel conductance in thalamocortical neurons. Interacts with SYT6 and SYT8; the interaction is Ca(2+)-dependent. Interacts with VAMP8. Interacts with SNAP23. Interacts with VAPA and SYBU. Interacts with PRRT2. Interacts with SEPT8. Interacts with STXBP5L. Interacts with synaptotagmin-1/SYT1. Interacts with SEPTIN5; in the cerebellar cortex. Interacts with SEPTIN4; in the striatum. In terms of processing, phosphorylated by CK2. Phosphorylation at Ser-188 by DAPK1 significantly decreases its interaction with STXBP1. Sumoylated, sumoylation is required for regulation of synaptic vesicle endocytosis. Post-translationally, (Microbial infection) Targeted and hydrolyzed by C.botulinum neurotoxin type C (BoNT/C) which inhibits neurotransmitter release. Probably hydrolyzes the 253-Lys-|-Ala-254 bond.

Its subcellular location is the cytoplasmic vesicle. It is found in the secretory vesicle. The protein resides in the synaptic vesicle membrane. The protein localises to the synapse. It localises to the synaptosome. Its subcellular location is the cell membrane. In terms of biological role, plays an essential role in hormone and neurotransmitter calcium-dependent exocytosis and endocytosis. Part of the SNARE (Soluble NSF Attachment Receptor) complex composed of SNAP25, STX1A and VAMP2 which mediates the fusion of synaptic vesicles with the presynaptic plasma membrane. STX1A and SNAP25 are localized on the plasma membrane while VAMP2 resides in synaptic vesicles. The pairing of the three SNAREs from the N-terminal SNARE motifs to the C-terminal anchors leads to the formation of the SNARE complex, which brings membranes into close proximity and results in final fusion. Participates in the calcium-dependent regulation of acrosomal exocytosis in sperm. Also plays an important role in the exocytosis of hormones such as insulin or glucagon-like peptide 1 (GLP-1). In Bos taurus (Bovine), this protein is Syntaxin-1A (STX1A).